The sequence spans 487 residues: Wax ester synthase/diacylglycerol acyltransferase 3 (487 aa).

Residues 1–193 (MYTMKKGKDM…KHASSNKKSW (193 aa)) are Cytoplasmic-facing. Residue histidine 151 is the Proton acceptor of the active site. A helical transmembrane segment spans residues 194-214 (WLVGRFWFMIRIIFTTVVELF). Over 215 to 487 (KYLLTLCFMR…MEKGVHKMEV (273 aa)) the chain is Lumenal.

It in the N-terminal section; belongs to the long-chain O-acyltransferase family. As to expression, mostly expressed in flowers and siliques.

It localises to the cell membrane. The protein localises to the endoplasmic reticulum membrane. The enzyme catalyses an acyl-CoA + a 1,2-diacyl-sn-glycerol = a triacyl-sn-glycerol + CoA. The catalysed reaction is a long chain fatty alcohol + a fatty acyl-CoA = a wax ester + CoA. It functions in the pathway glycerolipid metabolism; triacylglycerol biosynthesis. It participates in lipid metabolism. Its function is as follows. Bifunctional wax ester synthase/diacylglycerol acyltransferase. Involved in cuticular wax biosynthesis. In Arabidopsis thaliana (Mouse-ear cress), this protein is Wax ester synthase/diacylglycerol acyltransferase 3.